Reading from the N-terminus, the 227-residue chain is Type II restriction enzyme HhaII (227 aa).

In terms of assembly, homodimer.

It carries out the reaction Endonucleolytic cleavage of DNA to give specific double-stranded fragments with terminal 5'-phosphates.. Functionally, a P subtype restriction enzyme that recognizes the double-stranded sequence 5'-GANTC-3' and cleaves after G-1. This Haemophilus parahaemolyticus protein is Type II restriction enzyme HhaII (hhaIIR).